A 128-amino-acid polypeptide reads, in one-letter code: Putative pre-16S rRNA nuclease (128 aa).

Belongs to the YqgF nuclease family.

The protein resides in the cytoplasm. Could be a nuclease involved in processing of the 5'-end of pre-16S rRNA. In Sulfurovum sp. (strain NBC37-1), this protein is Putative pre-16S rRNA nuclease.